The chain runs to 493 residues: Cardiolipin synthase 1 (493 aa).

Helical transmembrane passes span 13-33 and 45-65; these read FTII…IIIF and WAWL…YLFF. PLD phosphodiesterase domains are found at residues 228-255 and 406-433; these read MNNR…GDEY and ENGF…DFRS. Active-site residues include His233, Lys235, Asp240, His411, Lys413, and Asp418.

Belongs to the phospholipase D family. Cardiolipin synthase subfamily.

The protein localises to the cell membrane. The catalysed reaction is 2 a 1,2-diacyl-sn-glycero-3-phospho-(1'-sn-glycerol) = a cardiolipin + glycerol. Its function is as follows. Catalyzes the reversible phosphatidyl group transfer from one phosphatidylglycerol molecule to another to form cardiolipin (CL) (diphosphatidylglycerol) and glycerol. This Staphylococcus aureus (strain COL) protein is Cardiolipin synthase 1 (cls1).